The sequence spans 1263 residues: DNA-directed RNA polymerase subunit beta (1263 aa).

It belongs to the RNA polymerase beta chain family. In terms of assembly, the RNAP catalytic core consists of 2 alpha, 1 beta, 1 beta' and 1 omega subunit. When a sigma factor is associated with the core the holoenzyme is formed, which can initiate transcription.

The catalysed reaction is RNA(n) + a ribonucleoside 5'-triphosphate = RNA(n+1) + diphosphate. DNA-dependent RNA polymerase catalyzes the transcription of DNA into RNA using the four ribonucleoside triphosphates as substrates. The protein is DNA-directed RNA polymerase subunit beta of Thermotoga petrophila (strain ATCC BAA-488 / DSM 13995 / JCM 10881 / RKU-1).